The following is a 322-amino-acid chain: HPr kinase/phosphorylase (322 aa).

Catalysis depends on residues His146 and Lys167. 161-168 (GDSGLGKS) lines the ATP pocket. Residue Ser168 coordinates Mg(2+). Residue Asp185 is the Proton acceptor; for phosphorylation activity. Proton donor; for dephosphorylation activity of the active site. Positions 209–218 (LEVRGLGLLD) are important for the catalytic mechanism of both phosphorylation and dephosphorylation. Glu210 contributes to the Mg(2+) binding site. Residue Arg250 is part of the active site. An important for the catalytic mechanism of dephosphorylation region spans residues 271–276 (QVAAGR).

This sequence belongs to the HPrK/P family. In terms of assembly, homohexamer. It depends on Mg(2+) as a cofactor.

The enzyme catalyses [HPr protein]-L-serine + ATP = [HPr protein]-O-phospho-L-serine + ADP + H(+). The catalysed reaction is [HPr protein]-O-phospho-L-serine + phosphate + H(+) = [HPr protein]-L-serine + diphosphate. Functionally, catalyzes the ATP- as well as the pyrophosphate-dependent phosphorylation of a specific serine residue in HPr, a phosphocarrier protein of the phosphoenolpyruvate-dependent sugar phosphotransferase system (PTS). HprK/P also catalyzes the pyrophosphate-producing, inorganic phosphate-dependent dephosphorylation (phosphorolysis) of seryl-phosphorylated HPr (P-Ser-HPr). This chain is HPr kinase/phosphorylase, found in Burkholderia mallei (strain NCTC 10247).